A 429-amino-acid chain; its full sequence is Enolase (429 aa).

Residue Gln-163 participates in (2R)-2-phosphoglycerate binding. Glu-205 acts as the Proton donor in catalysis. Mg(2+) contacts are provided by Asp-242, Glu-287, and Asp-314. Residues Lys-339, Arg-368, Ser-369, and Lys-390 each contribute to the (2R)-2-phosphoglycerate site. The active-site Proton acceptor is the Lys-339.

This sequence belongs to the enolase family. It depends on Mg(2+) as a cofactor.

The protein localises to the cytoplasm. It localises to the secreted. Its subcellular location is the cell surface. The enzyme catalyses (2R)-2-phosphoglycerate = phosphoenolpyruvate + H2O. It functions in the pathway carbohydrate degradation; glycolysis; pyruvate from D-glyceraldehyde 3-phosphate: step 4/5. Its function is as follows. Catalyzes the reversible conversion of 2-phosphoglycerate (2-PG) into phosphoenolpyruvate (PEP). It is essential for the degradation of carbohydrates via glycolysis. The chain is Enolase from Cupriavidus taiwanensis (strain DSM 17343 / BCRC 17206 / CCUG 44338 / CIP 107171 / LMG 19424 / R1) (Ralstonia taiwanensis (strain LMG 19424)).